The primary structure comprises 65 residues: MTTSSERPETSVDRKLLEILVCPVTKGPLEFDAARQELISRGAKLAYPIRDGIPIMLPEEARKLG.

Belongs to the UPF0434 family.

The chain is UPF0434 protein RPD_0454 from Rhodopseudomonas palustris (strain BisB5).